Here is a 219-residue protein sequence, read N- to C-terminus: Probable glutathione S-transferase GSTF1 (219 aa).

The GST N-terminal domain occupies 2 to 83 (TPVKVFGPAQ…YILRKYKTRE (82 aa)). Residues Ser-12, 41 to 42 (HK), 54 to 55 (QI), and 67 to 68 (ES) contribute to the glutathione site. Residues 91-219 (NLREAAMVDV…LAAVMAPQGA (129 aa)) form the GST C-terminal domain.

The protein belongs to the GST superfamily. Phi family. In terms of tissue distribution, constitutively expressed in roots.

It carries out the reaction RX + glutathione = an S-substituted glutathione + a halide anion + H(+). In terms of biological role, conjugation of reduced glutathione to a wide number of exogenous and endogenous hydrophobic electrophiles. The protein is Probable glutathione S-transferase GSTF1 (GSTF1) of Oryza sativa subsp. japonica (Rice).